We begin with the raw amino-acid sequence, 218 residues long: Protein-L-isoaspartate O-methyltransferase (218 aa).

Ser-60 is an active-site residue.

This sequence belongs to the methyltransferase superfamily. L-isoaspartyl/D-aspartyl protein methyltransferase family.

The protein resides in the cytoplasm. It carries out the reaction [protein]-L-isoaspartate + S-adenosyl-L-methionine = [protein]-L-isoaspartate alpha-methyl ester + S-adenosyl-L-homocysteine. Catalyzes the methyl esterification of L-isoaspartyl residues in peptides and proteins that result from spontaneous decomposition of normal L-aspartyl and L-asparaginyl residues. It plays a role in the repair and/or degradation of damaged proteins. The polypeptide is Protein-L-isoaspartate O-methyltransferase (Roseiflexus sp. (strain RS-1)).